Here is a 146-residue protein sequence, read N- to C-terminus: Hemoglobin subunit beta (146 aa).

Residues 2 to 146 enclose the Globin domain; that stretch reads HWSAEEKQLI…VAHALARKYH (145 aa). Heme b contacts are provided by histidine 63 and histidine 92.

The protein belongs to the globin family. Heterotetramer of two alpha chains and two beta chains. As to expression, red blood cells.

Involved in oxygen transport from the lung to the various peripheral tissues. This Streptopelia orientalis (Eastern turtle dove) protein is Hemoglobin subunit beta (HBB).